We begin with the raw amino-acid sequence, 152 residues long: Spermine/spermidine N(1)-acetyltransferase (152 aa).

The 150-residue stretch at 3–152 (INIKAVTDDN…NGEKVMVKEL (150 aa)) folds into the N-acetyltransferase domain. Acetyl-CoA contacts are provided by residues 82 to 84 (FFI), 89 to 95 (QGKGLGK), and 122 to 131 (NIHAIRLYQR). Tyr129 functions as the Proton donor in the catalytic mechanism.

This sequence belongs to the acetyltransferase family.

The catalysed reaction is an alkane-alpha,omega-diamine + acetyl-CoA = an N-acetylalkane-alpha,omega-diamine + CoA + H(+). It carries out the reaction spermine + acetyl-CoA = N(1)-acetylspermine + CoA + H(+). It catalyses the reaction spermidine + acetyl-CoA = N(1)-acetylspermidine + CoA + H(+). It participates in amine and polyamine degradation; spermine degradation. The protein operates within amine and polyamine degradation; spermidine degradation. Its activity is regulated as follows. Putrescine and N(8)-acetylspermidine are competitive inhibitors of spermidine acetylation. In terms of biological role, acetylates both spermidine and spermine at primary propyl amine moieties, with spermine being the preferred substrate. The protein is Spermine/spermidine N(1)-acetyltransferase (bltD) of Bacillus subtilis (strain 168).